The chain runs to 312 residues: Homoserine O-acetyltransferase (312 aa).

The active-site Acyl-thioester intermediate is C142. Substrate is bound by residues K163 and S192. Residue H235 is the Proton acceptor of the active site. E237 is an active-site residue. R249 is a binding site for substrate.

It belongs to the MetA family.

Its subcellular location is the cytoplasm. It catalyses the reaction L-homoserine + acetyl-CoA = O-acetyl-L-homoserine + CoA. The protein operates within amino-acid biosynthesis; L-methionine biosynthesis via de novo pathway; O-acetyl-L-homoserine from L-homoserine: step 1/1. Its function is as follows. Transfers an acetyl group from acetyl-CoA to L-homoserine, forming acetyl-L-homoserine. This Chelativorans sp. (strain BNC1) protein is Homoserine O-acetyltransferase.